We begin with the raw amino-acid sequence, 436 residues long: GTPase Der (436 aa).

2 EngA-type G domains span residues Pro4–Ala167 and Ile175–Glu351. GTP is bound by residues Gly10–Ser17, Asp57–Ile61, Asn119–Asp122, Gly181–Ser188, Asp229–Ile233, and Asn294–Asp297. The KH-like domain occupies Gln352–Lys436.

Belongs to the TRAFAC class TrmE-Era-EngA-EngB-Septin-like GTPase superfamily. EngA (Der) GTPase family. As to quaternary structure, associates with the 50S ribosomal subunit.

GTPase that plays an essential role in the late steps of ribosome biogenesis. The sequence is that of GTPase Der from Ligilactobacillus salivarius (strain UCC118) (Lactobacillus salivarius).